A 196-amino-acid polypeptide reads, in one-letter code: ATP-dependent Clp protease proteolytic subunit (196 aa).

Ser99 acts as the Nucleophile in catalysis. Residue His124 is part of the active site.

This sequence belongs to the peptidase S14 family. Fourteen ClpP subunits assemble into 2 heptameric rings which stack back to back to give a disk-like structure with a central cavity, resembling the structure of eukaryotic proteasomes.

Its subcellular location is the cytoplasm. The enzyme catalyses Hydrolysis of proteins to small peptides in the presence of ATP and magnesium. alpha-casein is the usual test substrate. In the absence of ATP, only oligopeptides shorter than five residues are hydrolyzed (such as succinyl-Leu-Tyr-|-NHMec, and Leu-Tyr-Leu-|-Tyr-Trp, in which cleavage of the -Tyr-|-Leu- and -Tyr-|-Trp bonds also occurs).. Functionally, cleaves peptides in various proteins in a process that requires ATP hydrolysis. Has a chymotrypsin-like activity. Plays a major role in the degradation of misfolded proteins. The chain is ATP-dependent Clp protease proteolytic subunit from Nitratiruptor sp. (strain SB155-2).